Reading from the N-terminus, the 686-residue chain is Methionine--tRNA ligase (686 aa).

The 'HIGH' region motif lies at 22-32; that stretch reads PYANGPIHLGH. Zn(2+)-binding residues include cysteine 153, cysteine 156, cysteine 166, and cysteine 169. The short motif at 337-341 is the 'KMSKS' region element; it reads KMSKS. Position 340 (lysine 340) interacts with ATP. The segment at 547-573 is disordered; it reads MLEDSKESTPAPAAAKPKKAATQKADA. Residues 584-686 form the tRNA-binding domain; that stretch reads DFLKVKLRVA…SGAEPGMEVR (103 aa).

This sequence belongs to the class-I aminoacyl-tRNA synthetase family. MetG type 1 subfamily. Homodimer. Zn(2+) is required as a cofactor.

It localises to the cytoplasm. It carries out the reaction tRNA(Met) + L-methionine + ATP = L-methionyl-tRNA(Met) + AMP + diphosphate. Is required not only for elongation of protein synthesis but also for the initiation of all mRNA translation through initiator tRNA(fMet) aminoacylation. The sequence is that of Methionine--tRNA ligase from Alcanivorax borkumensis (strain ATCC 700651 / DSM 11573 / NCIMB 13689 / SK2).